The following is a 367-amino-acid chain: Germination protease (367 aa).

Positions 1–15 (MKEPLDLSKYSVRTD) are excised as a propeptide.

It belongs to the peptidase A25 family. Homotetramer. In terms of processing, autoproteolytically processed. The inactive tetrameric zymogen termed p46 autoprocesses to a smaller form termed p41, which is active only during spore germination.

The enzyme catalyses Endopeptidase action with P4 Glu or Asp, P1 preferably Glu &gt; Asp, P1' hydrophobic and P2' Ala.. In terms of biological role, initiates the rapid degradation of small, acid-soluble proteins during spore germination. The protein is Germination protease of Bacillus cereus (strain ATCC 10987 / NRS 248).